The primary structure comprises 443 residues: Xaa-Pro dipeptidase (443 aa).

Residues D241, D252, H333, E378, and E417 each coordinate Mn(2+).

This sequence belongs to the peptidase M24B family. Bacterial-type prolidase subfamily. It depends on Mn(2+) as a cofactor.

The catalysed reaction is Xaa-L-Pro dipeptide + H2O = an L-alpha-amino acid + L-proline. Its function is as follows. Splits dipeptides with a prolyl residue in the C-terminal position. The chain is Xaa-Pro dipeptidase from Actinobacillus pleuropneumoniae serotype 5b (strain L20).